A 240-amino-acid polypeptide reads, in one-letter code: Sugar fermentation stimulation protein homolog (240 aa).

The protein belongs to the SfsA family.

The sequence is that of Sugar fermentation stimulation protein homolog from Saccharolobus islandicus (strain L.S.2.15 / Lassen #1) (Sulfolobus islandicus).